Consider the following 263-residue polypeptide: Acyl-[acyl-carrier-protein]--UDP-N-acetylglucosamine O-acyltransferase (263 aa).

This sequence belongs to the transferase hexapeptide repeat family. LpxA subfamily. Homotrimer.

It localises to the cytoplasm. It carries out the reaction a (3R)-hydroxyacyl-[ACP] + UDP-N-acetyl-alpha-D-glucosamine = a UDP-3-O-[(3R)-3-hydroxyacyl]-N-acetyl-alpha-D-glucosamine + holo-[ACP]. The protein operates within glycolipid biosynthesis; lipid IV(A) biosynthesis; lipid IV(A) from (3R)-3-hydroxytetradecanoyl-[acyl-carrier-protein] and UDP-N-acetyl-alpha-D-glucosamine: step 1/6. In terms of biological role, involved in the biosynthesis of lipid A, a phosphorylated glycolipid that anchors the lipopolysaccharide to the outer membrane of the cell. In Xanthomonas oryzae pv. oryzae (strain PXO99A), this protein is Acyl-[acyl-carrier-protein]--UDP-N-acetylglucosamine O-acyltransferase.